The chain runs to 545 residues: Chaperonin GroEL 2 (545 aa).

Residues 29 to 32, 86 to 90, Gly-414, and Asp-499 each bind ATP; these read TLGP and DGTTT.

This sequence belongs to the chaperonin (HSP60) family. Forms a cylinder of 14 subunits composed of two heptameric rings stacked back-to-back. Interacts with the co-chaperonin GroES.

The protein resides in the cytoplasm. It catalyses the reaction ATP + H2O + a folded polypeptide = ADP + phosphate + an unfolded polypeptide.. Its function is as follows. Together with its co-chaperonin GroES, plays an essential role in assisting protein folding. The GroEL-GroES system forms a nano-cage that allows encapsulation of the non-native substrate proteins and provides a physical environment optimized to promote and accelerate protein folding. This chain is Chaperonin GroEL 2, found in Chloroflexus aurantiacus (strain ATCC 29366 / DSM 635 / J-10-fl).